We begin with the raw amino-acid sequence, 158 residues long: MHEGVQVSSKLEELQALLAPVVVALGYECWGIEFSAQGRHSMLRVYIDKEGGVLVDDCAIVSRQISGVLDVEDPISVEYTLEVSSPGMERPLFTLEQFAKYVGEQVKIKLRSPFEGRRNFQGLLRGVEEQDVVVQVENHEFLLPIDMIDKANIIPSFD.

Belongs to the RimP family.

It is found in the cytoplasm. In terms of biological role, required for maturation of 30S ribosomal subunits. The protein is Ribosome maturation factor RimP of Pseudomonas fluorescens (strain Pf0-1).